The following is a 384-amino-acid chain: S-adenosylmethionine synthase (384 aa).

Position 15 (H15) interacts with ATP. Residue D17 participates in Mg(2+) binding. Residue E43 participates in K(+) binding. Positions 56 and 99 each coordinate L-methionine. The interval 99–109 is flexible loop; it reads QSADINQGVDR. Residues 164–166, 230–231, D239, 245–246, A262, and K266 each bind ATP; these read DAK, RF, and RK. Residue D239 coordinates L-methionine. An L-methionine-binding site is contributed by K270.

The protein belongs to the AdoMet synthase family. As to quaternary structure, homotetramer; dimer of dimers. It depends on Mg(2+) as a cofactor. K(+) serves as cofactor.

The protein localises to the cytoplasm. The catalysed reaction is L-methionine + ATP + H2O = S-adenosyl-L-methionine + phosphate + diphosphate. It participates in amino-acid biosynthesis; S-adenosyl-L-methionine biosynthesis; S-adenosyl-L-methionine from L-methionine: step 1/1. In terms of biological role, catalyzes the formation of S-adenosylmethionine (AdoMet) from methionine and ATP. The overall synthetic reaction is composed of two sequential steps, AdoMet formation and the subsequent tripolyphosphate hydrolysis which occurs prior to release of AdoMet from the enzyme. The protein is S-adenosylmethionine synthase of Haemophilus influenzae (strain 86-028NP).